We begin with the raw amino-acid sequence, 249 residues long: Transmembrane protein 106C (249 aa).

Positions 1–26 (MGSRHSTYAHRPFSKRRKADDTEDSL) are disordered. Gly2 is lipidated: N-myristoyl glycine. The next 2 helical transmembrane spans lie at 86 to 106 (YVLL…FFLF) and 197 to 217 (SYVY…VVFV).

The protein belongs to the TMEM106 family. As to quaternary structure, interacts with TMEM106B.

The protein localises to the endoplasmic reticulum membrane. It is found in the membrane. In Bos taurus (Bovine), this protein is Transmembrane protein 106C (TMEM106C).